Consider the following 238-residue polypeptide: 1-(5-phosphoribosyl)-5-[(5-phosphoribosylamino)methylideneamino] imidazole-4-carboxamide isomerase (238 aa).

The active-site Proton acceptor is Asp8. Asp129 acts as the Proton donor in catalysis.

It belongs to the HisA/HisF family.

The protein localises to the cytoplasm. The catalysed reaction is 1-(5-phospho-beta-D-ribosyl)-5-[(5-phospho-beta-D-ribosylamino)methylideneamino]imidazole-4-carboxamide = 5-[(5-phospho-1-deoxy-D-ribulos-1-ylimino)methylamino]-1-(5-phospho-beta-D-ribosyl)imidazole-4-carboxamide. It participates in amino-acid biosynthesis; L-histidine biosynthesis; L-histidine from 5-phospho-alpha-D-ribose 1-diphosphate: step 4/9. This chain is 1-(5-phosphoribosyl)-5-[(5-phosphoribosylamino)methylideneamino] imidazole-4-carboxamide isomerase, found in Anaeromyxobacter dehalogenans (strain 2CP-C).